An 854-amino-acid polypeptide reads, in one-letter code: N-terminal acetyltransferase A complex subunit NAT1 (854 aa).

At serine 2 the chain carries N-acetylserine. TPR repeat units follow at residues 20 to 53 (ENDQFLEALKLYEGKQYKKSLKLLDAILKKDGSH), 54 to 87 (VDSLALKGLDLYSVGEKDDAASYVANAIRKIEGA), 91 to 124 (PICCHVLGIYMRNTKEYKESIKWFTAALNNGSTN), 126 to 162 (QIYRDLATLQSQIGDFKNALVSRKKYWEAFLGYRANW), 241 to 274 (FGLLERKATIYMKLGQLKDASIVYRTLIKRNPDN), 384 to 417 (IWTNYYLSQHFLFLKDFPKAQEYIDAALDHTPTL), and 452 to 485 (RFINCKTVKYFLRANNIDKAVEVASLFTKNDDSV). Positions 623-667 (LKRKSDSLDENSDEIQNNGQNSSSQKKKAKKEAAAMNKRKETEAK) form a coiled coil. Positions 626–668 (KSDSLDENSDEIQNNGQNSSSQKKKAKKEAAAMNKRKETEAKS) are disordered. Residue serine 674 is modified to Phosphoserine. The stretch at 728 to 761 (ALCFASLNKFAKRFGTTSGLFGSMAIVLLHATRN) is one TPR 8 repeat.

In terms of assembly, component of the N-terminal acetyltransferase A (NatA) complex, which is composed of ARD1, NAT1 and NAT5. Can self-associate. NAT1 associates with the nascent polypeptide chain and the ribosome. Post-translationally, the N-terminus is blocked.

The protein localises to the cytoplasm. Functionally, non-catalytic component of the NatA N-terminal acetyltransferase, which catalyzes acetylation of proteins beginning with Met-Ser, Met-Gly and Met-Ala. N-acetylation plays a role in normal eukaryotic translation and processing, protect against proteolytic degradation and protein turnover. NAT1 anchors ARD1 and NAT5 to the ribosome and may present the N termini of nascent polypeptides for acetylation. The sequence is that of N-terminal acetyltransferase A complex subunit NAT1 (NAT1) from Saccharomyces cerevisiae (strain ATCC 204508 / S288c) (Baker's yeast).